Reading from the N-terminus, the 162-residue chain is NADH-quinone oxidoreductase subunit I (162 aa).

4Fe-4S ferredoxin-type domains lie at 52 to 82 and 93 to 122; these read LRRYPNGEERCIACKLCEAICPAQAITIEAG and TRYDIDMVKCIYCGFCQEACPVDAIVEGPN. Positions 62, 65, 68, 72, 102, 105, 108, and 112 each coordinate [4Fe-4S] cluster.

The protein belongs to the complex I 23 kDa subunit family. In terms of assembly, NDH-1 is composed of 14 different subunits. Subunits NuoA, H, J, K, L, M, N constitute the membrane sector of the complex. [4Fe-4S] cluster is required as a cofactor.

The protein localises to the cell inner membrane. It catalyses the reaction a quinone + NADH + 5 H(+)(in) = a quinol + NAD(+) + 4 H(+)(out). Its function is as follows. NDH-1 shuttles electrons from NADH, via FMN and iron-sulfur (Fe-S) centers, to quinones in the respiratory chain. The immediate electron acceptor for the enzyme in this species is believed to be ubiquinone. Couples the redox reaction to proton translocation (for every two electrons transferred, four hydrogen ions are translocated across the cytoplasmic membrane), and thus conserves the redox energy in a proton gradient. This is NADH-quinone oxidoreductase subunit I from Azorhizobium caulinodans (strain ATCC 43989 / DSM 5975 / JCM 20966 / LMG 6465 / NBRC 14845 / NCIMB 13405 / ORS 571).